A 339-amino-acid chain; its full sequence is GTPase Obg (339 aa).

Positions 1–158 constitute an Obg domain; that stretch reads MKFLDQVDLR…RDLTFELKLM (158 aa). Disordered stretches follow at residues 66–86 and 125–148; these read FAED…GEDK and GNAF…PGEE. The span at 72 to 86 shows a compositional bias: basic and acidic residues; that stretch reads PGGRREQTGASGEDK. A compositionally biased stretch (polar residues) spans 129-138; that stretch reads FKSSTNQAPR. The region spanning 159-329 is the OBG-type G domain; it reads ADVGLVGFPN…LKYTLFDTVH (171 aa). GTP contacts are provided by residues 165–172, 190–194, 212–215, 279–282, and 310–312; these read GFPNAGKS, FTTLT, DIPG, SKID, and SAV. Serine 172 and threonine 192 together coordinate Mg(2+).

It belongs to the TRAFAC class OBG-HflX-like GTPase superfamily. OBG GTPase family. In terms of assembly, monomer. It depends on Mg(2+) as a cofactor.

The protein localises to the cytoplasm. Functionally, an essential GTPase which binds GTP, GDP and possibly (p)ppGpp with moderate affinity, with high nucleotide exchange rates and a fairly low GTP hydrolysis rate. Plays a role in control of the cell cycle, stress response, ribosome biogenesis and in those bacteria that undergo differentiation, in morphogenesis control. This is GTPase Obg from Salinibacter ruber (strain DSM 13855 / M31).